We begin with the raw amino-acid sequence, 261 residues long: Uridylate kinase (261 aa).

Positions 1-23 are disordered; the sequence is MTEPDVAGAPASKPEPASTGAAS. 36–39 serves as a coordination point for ATP; the sequence is KLGG. Glycine 77 is a binding site for UMP. Positions 78 and 82 each coordinate ATP. UMP contacts are provided by residues aspartate 97 and 158–165; that span reads MGLPYFST. Residues phenylalanine 191 and aspartate 194 each coordinate ATP.

This sequence belongs to the UMP kinase family. Homohexamer.

It is found in the cytoplasm. It catalyses the reaction UMP + ATP = UDP + ADP. It participates in pyrimidine metabolism; CTP biosynthesis via de novo pathway; UDP from UMP (UMPK route): step 1/1. Its activity is regulated as follows. Inhibited by UTP. Catalyzes the reversible phosphorylation of UMP to UDP. The polypeptide is Uridylate kinase (Mycobacterium tuberculosis (strain ATCC 25177 / H37Ra)).